We begin with the raw amino-acid sequence, 127 residues long: Large ribosomal subunit protein uL24 (127 aa).

Belongs to the universal ribosomal protein uL24 family. Part of the 50S ribosomal subunit.

Its function is as follows. One of two assembly initiator proteins, it binds directly to the 5'-end of the 23S rRNA, where it nucleates assembly of the 50S subunit. In terms of biological role, one of the proteins that surrounds the polypeptide exit tunnel on the outside of the subunit. This Leptospira biflexa serovar Patoc (strain Patoc 1 / ATCC 23582 / Paris) protein is Large ribosomal subunit protein uL24.